A 79-amino-acid chain; its full sequence is Dolichyl-diphosphooligosaccharide--protein glycosyltransferase subunit TMEM258 (79 aa).

Met1 is modified (N-acetylmethionine). The next 2 membrane-spanning stretches (helical) occupy residues 17 to 37 (VFPHLTVVLLAIGMFFTAWFF) and 59 to 79 (VASLFMGFGVLFLLLWVGIYI).

Belongs to the OST5 family. In terms of assembly, component of the oligosaccharyltransferase (OST) complex. OST exists in two different complex forms which contain common core subunits RPN1, RPN2, OST48, OST4, DAD1 and TMEM258, either STT3A or STT3B as catalytic subunits, and form-specific accessory subunits. STT3A complex assembly occurs through the formation of 3 subcomplexes. Subcomplex 1 contains RPN1 and TMEM258, subcomplex 2 contains the STT3A-specific subunits STT3A, DC2/OSTC, and KCP2 as well as the core subunit OST4, and subcomplex 3 contains RPN2, DAD1, and OST48. The STT3A complex can form stable complexes with the Sec61 complex or with both the Sec61 and TRAP complexes.

Its subcellular location is the membrane. It localises to the endoplasmic reticulum. It is found in the cytoplasm. Its pathway is protein modification; protein glycosylation. Functionally, subunit of the oligosaccharyl transferase (OST) complex that catalyzes the initial transfer of a defined glycan (Glc(3)Man(9)GlcNAc(2) in eukaryotes) from the lipid carrier dolichol-pyrophosphate to an asparagine residue within an Asn-X-Ser/Thr consensus motif in nascent polypeptide chains, the first step in protein N-glycosylation. N-glycosylation occurs cotranslationally and the complex associates with the Sec61 complex at the channel-forming translocon complex that mediates protein translocation across the endoplasmic reticulum (ER). All subunits are required for a maximal enzyme activity. Involved in ER homeostasis in the colonic epithelium. This chain is Dolichyl-diphosphooligosaccharide--protein glycosyltransferase subunit TMEM258, found in Bos taurus (Bovine).